A 617-amino-acid chain; its full sequence is Phosphomethylpyrimidine synthase (617 aa).

Residues N230, M259, Y288, H324, 344 to 346, 385 to 388, and E424 each bind substrate; these read SRG and DGLR. A Zn(2+)-binding site is contributed by H428. Y451 provides a ligand contact to substrate. H492 is a Zn(2+) binding site. Residues C572, C575, and C580 each contribute to the [4Fe-4S] cluster site.

The protein belongs to the ThiC family. As to quaternary structure, homodimer. Requires [4Fe-4S] cluster as cofactor.

It catalyses the reaction 5-amino-1-(5-phospho-beta-D-ribosyl)imidazole + S-adenosyl-L-methionine = 4-amino-2-methyl-5-(phosphooxymethyl)pyrimidine + CO + 5'-deoxyadenosine + formate + L-methionine + 3 H(+). It functions in the pathway cofactor biosynthesis; thiamine diphosphate biosynthesis. Functionally, catalyzes the synthesis of the hydroxymethylpyrimidine phosphate (HMP-P) moiety of thiamine from aminoimidazole ribotide (AIR) in a radical S-adenosyl-L-methionine (SAM)-dependent reaction. This Paracidovorax citrulli (strain AAC00-1) (Acidovorax citrulli) protein is Phosphomethylpyrimidine synthase.